Consider the following 350-residue polypeptide: Putative transport protein YdbI (350 aa).

The next 8 helical transmembrane spans lie at 18–38 (IFVVLTGVLYLFKSMINLILL), 67–87 (VVITFLYMLLAVLLTVGGFVF), 145–165 (ISTFGLQVVMALILSMFFLFE), 207–227 (FIIALVNCILTFIALWIMHFP), 229–249 (LFGLSIMVFFLGLIPVAGVVI), 257–277 (IAYSTGGGMYVLYIVLVIFAI), 289–309 (LMSAKTELPIFFTFTVLIFSE), and 311–331 (FFGIWGLIIGIPIFVFLLDIL).

It belongs to the autoinducer-2 exporter (AI-2E) (TC 2.A.86) family.

It is found in the cell membrane. The protein is Putative transport protein YdbI (ydbI) of Bacillus subtilis (strain 168).